Reading from the N-terminus, the 67-residue chain is Small ribosomal subunit protein bS21 (67 aa).

The protein belongs to the bacterial ribosomal protein bS21 family.

The protein is Small ribosomal subunit protein bS21 of Magnetococcus marinus (strain ATCC BAA-1437 / JCM 17883 / MC-1).